The sequence spans 97 residues: Class II hydrophobin 3 (97 aa).

An N-terminal signal peptide occupies residues 1-16; it reads MKFFAAAALFIAGVLA. 4 disulfides stabilise this stretch: Cys-30–Cys-79, Cys-40–Cys-70, Cys-41–Cys-53, and Cys-80–Cys-91.

It belongs to the cerato-ulmin hydrophobin family. In terms of assembly, homodimer. Homodimers further self-assemble to form highly ordered films at water-air interfaces through intermolecular interactions.

It localises to the secreted. Its subcellular location is the cell wall. Functionally, aerial growth, conidiation, and dispersal of filamentous fungi in the environment rely upon a capability of their secreting small amphipathic proteins called hydrophobins (HPBs) with low sequence identity. Class I can self-assemble into an outermost layer of rodlet bundles on aerial cell surfaces, conferring cellular hydrophobicity that supports fungal growth, development and dispersal; whereas Class II form highly ordered films at water-air interfaces through intermolecular interactions but contribute nothing to the rodlet structure. This chain is Class II hydrophobin 3, found in Trichoderma asperellum (strain ATCC 204424 / CBS 433.97 / NBRC 101777).